A 54-amino-acid polypeptide reads, in one-letter code: Ovomucoid (54 aa).

The 51-residue stretch at 4-54 (VDCSDYPKPACSLDYMPLCGSDSKTYSNKCNFCNAVVDSNGTLTLSHFEKC) folds into the Kazal-like domain. 3 disulfide bridges follow: Cys-6–Cys-36, Cys-14–Cys-33, and Cys-22–Cys-54. A glycan (N-linked (GlcNAc...) asparagine) is linked at Asn-43.

It localises to the secreted. The sequence is that of Ovomucoid from Chroicocephalus ridibundus (Black-headed gull).